Reading from the N-terminus, the 299-residue chain is DNA repair protein RecO (299 aa).

The tract at residues 1 to 62 (MTLNSDADPD…GRRAPRTPAS (62 aa)) is disordered. A compositionally biased stretch (low complexity) spans 25-41 (ASKPARSTRKSSSAKSA).

This sequence belongs to the RecO family.

Functionally, involved in DNA repair and RecF pathway recombination. This is DNA repair protein RecO from Paraburkholderia xenovorans (strain LB400).